Here is a 184-residue protein sequence, read N- to C-terminus: Large ribosomal subunit protein bL9 (184 aa).

Residues 160–184 (LQNQKSEQQEAEQDANKEATDGDDS) form a disordered region. Over residues 173 to 184 (DANKEATDGDDS) the composition is skewed to basic and acidic residues.

The protein belongs to the bacterial ribosomal protein bL9 family.

Binds to the 23S rRNA. The sequence is that of Large ribosomal subunit protein bL9 from Wolbachia pipientis wMel.